The following is an 81-amino-acid chain: Small serum protein 4 (81 aa).

The first 19 residues, 1–19, serve as a signal peptide directing secretion; the sequence is MKVFFILIIFSFTLATCQG. 3 disulfide bridges follow: Cys21–Cys74, Cys41–Cys66, and Cys64–Cys73.

The protein belongs to the beta-microseminoprotein family.

Its subcellular location is the secreted. Its function is as follows. Shows an slight inhibitory effect toward the metalloproteinase brevilysin H6, but does not inhibit the metalloproteinases thermolysin, HR1A and HR1B. The protein is Small serum protein 4 of Protobothrops flavoviridis (Habu).